The sequence spans 240 residues: 4-hydroxy-tetrahydrodipicolinate reductase (240 aa).

NAD(+) is bound by residues 79–81 (ATT) and 103–106 (SANM). Residue His-135 is the Proton donor/acceptor of the active site. A (S)-2,3,4,5-tetrahydrodipicolinate-binding site is contributed by His-136. Lys-139 functions as the Proton donor in the catalytic mechanism. 145 to 146 (GT) contributes to the (S)-2,3,4,5-tetrahydrodipicolinate binding site.

Belongs to the DapB family.

It localises to the cytoplasm. It carries out the reaction (S)-2,3,4,5-tetrahydrodipicolinate + NAD(+) + H2O = (2S,4S)-4-hydroxy-2,3,4,5-tetrahydrodipicolinate + NADH + H(+). The enzyme catalyses (S)-2,3,4,5-tetrahydrodipicolinate + NADP(+) + H2O = (2S,4S)-4-hydroxy-2,3,4,5-tetrahydrodipicolinate + NADPH + H(+). The protein operates within amino-acid biosynthesis; L-lysine biosynthesis via DAP pathway; (S)-tetrahydrodipicolinate from L-aspartate: step 4/4. Catalyzes the conversion of 4-hydroxy-tetrahydrodipicolinate (HTPA) to tetrahydrodipicolinate. The sequence is that of 4-hydroxy-tetrahydrodipicolinate reductase from Staphylococcus aureus (strain bovine RF122 / ET3-1).